Reading from the N-terminus, the 291-residue chain is Transmembrane protein 41B (291 aa).

The segment covering 1-11 (MAKGRVADRSP) has biased composition (basic and acidic residues). Positions 1–43 (MAKGRVADRSPTEMLHSTPAGDRAVRTQGSAAPGSKDHLNEKP) are disordered. A Phosphothreonine modification is found at threonine 18. Serine 35 bears the Phosphoserine mark. The next 6 helical transmembrane spans lie at 52–72 (TSLLILVSIFSCAAFVMFLVY), 109–129 (FYVQVLVAYFATYIFLQTFAI), 147–169 (LALFLVCLCSGLGASFCYMLSYL), 197–217 (LINYIIFLRITPFLPNWFINI), 225–245 (PLKVFFIGTFLGVAPPSFVAI), and 262–282 (SWSSVFILMVLALLSILPAIF). A VTT domain; required for its function in autophagy region spans residues 140 to 251 (GFLYPFPLAL…FVAIKAGTTL (112 aa)).

This sequence belongs to the TMEM41 family. Interacts with VMP1. Interacts with COPA, COPB1, VDAC1 and ERLIN2. Interacts with ATG2A. Interacts with SURF4. In terms of tissue distribution, expressed in brain, spinal cord, kidney and first lumbar dorsal root ganglia during postnatal development. Expressed in motor neurons and proprioceptive neurons.

The protein localises to the endoplasmic reticulum membrane. The protein resides in the endomembrane system. It catalyses the reaction a 1,2-diacyl-sn-glycero-3-phospho-L-serine(in) = a 1,2-diacyl-sn-glycero-3-phospho-L-serine(out). The enzyme catalyses cholesterol(in) = cholesterol(out). It carries out the reaction a 1,2-diacyl-sn-glycero-3-phosphocholine(in) = a 1,2-diacyl-sn-glycero-3-phosphocholine(out). The catalysed reaction is a 1,2-diacyl-sn-glycero-3-phosphoethanolamine(in) = a 1,2-diacyl-sn-glycero-3-phosphoethanolamine(out). Phospholipid scramblase involved in lipid homeostasis and membrane dynamics processes. Has phospholipid scramblase activity toward cholesterol and phosphatidylserine, as well as phosphatidylethanolamine and phosphatidylcholine. Required for autophagosome formation: participates in early stages of autophagosome biogenesis at the endoplasmic reticulum (ER) membrane by reequilibrating the leaflets of the ER as lipids are extracted by ATG2 (ATG2A or ATG2B) to mediate autophagosome assembly. In addition to autophagy, involved in other processes in which phospholipid scramblase activity is required. Required for normal motor neuron development. The sequence is that of Transmembrane protein 41B from Mus musculus (Mouse).